The sequence spans 164 residues: Protein SprT (164 aa).

Residues 14–156 (QQAETFFKRP…LCKRCRAILV (143 aa)) form the SprT-like domain. His-69 contributes to the Zn(2+) binding site. Glu-70 is a catalytic residue. A Zn(2+)-binding site is contributed by His-73.

This sequence belongs to the SprT family. Zn(2+) is required as a cofactor.

The protein localises to the cytoplasm. This is Protein SprT from Pseudomonas putida (strain GB-1).